Here is a 436-residue protein sequence, read N- to C-terminus: tRNA pseudouridine synthase Pus10 (436 aa).

Asp-254 acts as the Nucleophile in catalysis. Residues Tyr-322 and Tyr-394 each coordinate substrate.

Belongs to the pseudouridine synthase Pus10 family.

It catalyses the reaction uridine(54) in tRNA = pseudouridine(54) in tRNA. The catalysed reaction is uridine(55) in tRNA = pseudouridine(55) in tRNA. Functionally, responsible for synthesis of pseudouridine from uracil-54 and uracil-55 in the psi GC loop of transfer RNAs. The protein is tRNA pseudouridine synthase Pus10 of Methanopyrus kandleri (strain AV19 / DSM 6324 / JCM 9639 / NBRC 100938).